The primary structure comprises 158 residues: MIVFPFLLFQMLSTEVEGGLFDFNATLPLMALQFIILTTILNFIFYKPVTNVLDERDEYIRNSLTTASASLVKADELTKTYEQQLAESRKKAQDIIKVAQEQAQQIVSVKIKDAQAYGEKLVSEAFHQLSIQKEDALKTLEMQVDTLSDLIKSKLLND.

Residues 25–45 (ATLPLMALQFIILTTILNFIF) form a helical membrane-spanning segment.

This sequence belongs to the ATPase B chain family. In terms of assembly, F-type ATPases have 2 components, F(1) - the catalytic core - and F(0) - the membrane proton channel. F(1) has five subunits: alpha(3), beta(3), gamma(1), delta(1), epsilon(1). F(0) has four main subunits: a(1), b(1), b'(1) and c(10-14). The alpha and beta chains form an alternating ring which encloses part of the gamma chain. F(1) is attached to F(0) by a central stalk formed by the gamma and epsilon chains, while a peripheral stalk is formed by the delta, b and b' chains.

Its subcellular location is the plastid. The protein resides in the chloroplast thylakoid membrane. Its function is as follows. F(1)F(0) ATP synthase produces ATP from ADP in the presence of a proton or sodium gradient. F-type ATPases consist of two structural domains, F(1) containing the extramembraneous catalytic core and F(0) containing the membrane proton channel, linked together by a central stalk and a peripheral stalk. During catalysis, ATP synthesis in the catalytic domain of F(1) is coupled via a rotary mechanism of the central stalk subunits to proton translocation. Functionally, component of the F(0) channel, it forms part of the peripheral stalk, linking F(1) to F(0). The b'-subunit is a diverged and duplicated form of b found in plants and photosynthetic bacteria. The sequence is that of ATP synthase subunit b', chloroplastic from Gracilaria tenuistipitata var. liui (Red alga).